We begin with the raw amino-acid sequence, 216 residues long: Probable GTP-binding protein EngB (216 aa).

An EngB-type G domain is found at 24–205 (QTPELAFVGR…WARIASAATD (182 aa)). Residues 32–39 (GRSNVGKS), 59–63 (GRTRA), 86–89 (DLPG), 153–156 (TKMD), and 184–186 (FSA) each bind GTP. Mg(2+)-binding residues include S39 and T61.

This sequence belongs to the TRAFAC class TrmE-Era-EngA-EngB-Septin-like GTPase superfamily. EngB GTPase family. The cofactor is Mg(2+).

Its function is as follows. Necessary for normal cell division and for the maintenance of normal septation. The sequence is that of Probable GTP-binding protein EngB from Anaeromyxobacter sp. (strain Fw109-5).